Reading from the N-terminus, the 381-residue chain is uncharacterized protein (381 aa).

A run of 11 helical transmembrane segments spans residues isoleucine 10–tyrosine 29, isoleucine 75–leucine 93, leucine 98–arginine 117, tyrosine 130–valine 147, threonine 157–tyrosine 179, isoleucine 199–glutamate 221, leucine 236–isoleucine 255, tyrosine 262–threonine 284, asparagine 289–leucine 311, alanine 323–leucine 340, and leucine 355–isoleucine 374.

It localises to the cell membrane. This is an uncharacterized protein from Rickettsia prowazekii (strain Madrid E).